Reading from the N-terminus, the 446-residue chain is Bifunctional protein GlmU (446 aa).

The interval Met-1–Arg-229 is pyrophosphorylase. Residues Leu-11–Gly-14, Lys-25, Gln-78, Gly-83–Thr-84, Tyr-106–Asp-108, Gly-141, Glu-155, Asn-170, and Asn-227 each bind UDP-N-acetyl-alpha-D-glucosamine. Asp-108 is a binding site for Mg(2+). Residue Asn-227 coordinates Mg(2+). A linker region spans residues Ala-230–Asp-250. The tract at residues Gly-251–Asn-446 is N-acetyltransferase. Residues Arg-316 and Lys-334 each contribute to the UDP-N-acetyl-alpha-D-glucosamine site. Residue His-346 is the Proton acceptor of the active site. UDP-N-acetyl-alpha-D-glucosamine is bound by residues Tyr-349 and Asn-360. Residues Ala-363, Asn-369–Tyr-370, Ser-388, Ser-406, and Arg-423 contribute to the acetyl-CoA site.

The protein in the N-terminal section; belongs to the N-acetylglucosamine-1-phosphate uridyltransferase family. This sequence in the C-terminal section; belongs to the transferase hexapeptide repeat family. Homotrimer. Mg(2+) is required as a cofactor.

It localises to the cytoplasm. The enzyme catalyses alpha-D-glucosamine 1-phosphate + acetyl-CoA = N-acetyl-alpha-D-glucosamine 1-phosphate + CoA + H(+). It catalyses the reaction N-acetyl-alpha-D-glucosamine 1-phosphate + UTP + H(+) = UDP-N-acetyl-alpha-D-glucosamine + diphosphate. The protein operates within nucleotide-sugar biosynthesis; UDP-N-acetyl-alpha-D-glucosamine biosynthesis; N-acetyl-alpha-D-glucosamine 1-phosphate from alpha-D-glucosamine 6-phosphate (route II): step 2/2. Its pathway is nucleotide-sugar biosynthesis; UDP-N-acetyl-alpha-D-glucosamine biosynthesis; UDP-N-acetyl-alpha-D-glucosamine from N-acetyl-alpha-D-glucosamine 1-phosphate: step 1/1. It participates in bacterial outer membrane biogenesis; LPS lipid A biosynthesis. Catalyzes the last two sequential reactions in the de novo biosynthetic pathway for UDP-N-acetylglucosamine (UDP-GlcNAc). The C-terminal domain catalyzes the transfer of acetyl group from acetyl coenzyme A to glucosamine-1-phosphate (GlcN-1-P) to produce N-acetylglucosamine-1-phosphate (GlcNAc-1-P), which is converted into UDP-GlcNAc by the transfer of uridine 5-monophosphate (from uridine 5-triphosphate), a reaction catalyzed by the N-terminal domain. This Paracoccus denitrificans (strain Pd 1222) protein is Bifunctional protein GlmU.